We begin with the raw amino-acid sequence, 424 residues long: WD-40 repeat-containing protein MSI3 (424 aa).

Methionine 1 carries the N-acetylmethionine modification. 5 WD repeats span residues 167–207, 216–256, 259–299, 303–343, and 362–402; these read GHEQ…TDKV, GHQS…MQHQ, VHER…APLH, KHEG…DEQL, and GHKA…YRED. The short motif at 233 to 249 is the DWD box element; that stretch reads IFGSAGDDCQLVIWDLR. Residues 394 to 424 form a disordered region; sequence MAESIYREDDEDEDDDDEGNQNAQHSNENQK. A compositionally biased stretch (acidic residues) spans 401-412; the sequence is EDDEDEDDDDEG. A compositionally biased stretch (polar residues) spans 413–424; that stretch reads NQNAQHSNENQK.

The protein belongs to the WD repeat RBAP46/RBAP48/MSI1 family.

It is found in the nucleus. In terms of biological role, core histone-binding subunit that may target chromatin assembly factors, chromatin remodeling factors and histone deacetylases to their histone substrates in a manner that is regulated by nucleosomal DNA. The protein is WD-40 repeat-containing protein MSI3 (MSI3) of Arabidopsis thaliana (Mouse-ear cress).